Here is a 366-residue protein sequence, read N- to C-terminus: 5-hydroxytryptamine receptor 1F (366 aa).

Residues 1 to 24 (MDFLNSSDQNLTSEELLNRMPSKI) lie on the Extracellular side of the membrane. Asparagine 5 and asparagine 10 each carry an N-linked (GlcNAc...) asparagine glycan. Residues 25–49 (LVSLTLSGLALMTTTINSLVIAAII) traverse the membrane as a helical segment. Residues 50–59 (VTRKLHHPAN) are Cytoplasmic-facing. Residues 60 to 81 (YLICSLAVTDFLVAVLVMPFSI) form a helical membrane-spanning segment. The Extracellular portion of the chain corresponds to 82–96 (VYIVRESWIMGQVVC). A disulfide bridge links cysteine 96 with cysteine 172. The helical transmembrane segment at 97–119 (DIWLSVDITCCTCSILHLSAIAL) threads the bilayer. Serotonin contacts are provided by aspartate 103 and cysteine 107. A DRY motif; important for ligand-induced conformation changes motif is present at residues 120-122 (DRY). Residues 120 to 139 (DRYRAITDAVEYARKRTPKH) are Cytoplasmic-facing. The helical transmembrane segment at 140-159 (AGIMITIVWIISVFISMPPL) threads the bilayer. The Extracellular portion of the chain corresponds to 160-178 (FWRHQGTSRDDECIIKHDH). A helical membrane pass occupies residues 179–202 (IVSTIYSTFGAFYIPLALILILYY). The Cytoplasmic portion of the chain corresponds to 203 to 291 (KIYRAAKTLY…KISGTRERKA (89 aa)). Residues 292–315 (ATTLGLILGAFVICWLPFFVKELV) traverse the membrane as a helical segment. Over 316-327 (VNVCDKCKISEE) the chain is Extracellular. A helical transmembrane segment spans residues 328-350 (MSNFLAWLGYLNSLINPLIYTIF). Positions 343 to 347 (NPLIY) match the NPxxY motif; important for ligand-induced conformation changes and signaling motif. Over 351–366 (NEDFKKAFQKLVRCRC) the chain is Cytoplasmic.

This sequence belongs to the G-protein coupled receptor 1 family.

It localises to the cell membrane. G-protein coupled receptor for 5-hydroxytryptamine (serotonin). Also functions as a receptor for various alkaloids and psychoactive substances. Receptor for lasmiditan, a drug for the treatment of acute migraine. Ligand binding causes a conformation change that triggers signaling via guanine nucleotide-binding proteins (G proteins) and modulates the activity of downstream effectors, such as adenylate cyclase. HTR1F is coupled to G(i)/G(o) G alpha proteins and mediates inhibitory neurotransmission by inhibiting adenylate cyclase activity. The chain is 5-hydroxytryptamine receptor 1F from Homo sapiens (Human).